A 684-amino-acid polypeptide reads, in one-letter code: MRFWYFSAILWVVCQALPSKKQYSVAPELLPGLSEIEDKSTIPEMYAGHMPLAQSNSDDKDEIDYFFWKFSRPDKVLNTLIIWLNGGPGCSSMDGALVENGPFRVNKDLKLVVNEGSWHTRADMLYVDQPVNTGFSVSNSKEKKYDEDLTLTTQHFMDFLESYFKVFPDDQFKDLIIAGESYSGQYVPFLAEAIQKRNAETSDDLAKYNLRGILVGNGWMDPDTQSLAYLPFALSKGLIDQNNPHFSTLLRQQEKCQDRIISRNPNEHQPFQYEECENILQSILTATRDVSADTPSNQVCMNIYSYNLRDSYPACGSNWPDEVLHVPGFFDRPGILEALNLDPSKVPQWKECNLEVYYHLKNRKAVPSVRKLPALLDSGLKVILYNGEMDLLCNERGVLDMIDKLQWGGAKGFSSKTKEYDWNYRDFETNTDHIAGNVLHDRNLTYISVHNASHMVPNDKSLYSRGVVDIYLDDIFLEELHGKDVLVTTSEKDMDDFDNSKLGVLGITDGKPSEEEELEEEFDQYVDELEEGESESGLLDDDKEDETVGATDQNDDKNKGGEDKPNENPDKEKEEQDRQRKRRKGTFKIFGITILVVLTLGSFVFYIYIRKHTNKTRAILIDPSRRQHDSQNKRVSWADDLEHGYDFETDQSQPRSGQSAPKKNGSYTRVPNTELDESFELENL.

An N-terminal signal peptide occupies residues 1-16 (MRFWYFSAILWVVCQA). Over 17-588 (LPSKKQYSVA…QRKRRKGTFK (572 aa)) the chain is Lumenal. Catalysis depends on residues Ser-181 and Asp-390. 2 N-linked (GlcNAc...) asparagine glycosylation sites follow: Asn-443 and Asn-451. The active site involves His-454. The interval 498–582 (DNSKLGVLGI…KEEQDRQRKR (85 aa)) is disordered. Residues 514 to 547 (EEEELEEEFDQYVDELEEGESESGLLDDDKEDET) show a composition bias toward acidic residues. A compositionally biased stretch (basic and acidic residues) spans 554–578 (NDDKNKGGEDKPNENPDKEKEEQDR). The helical transmembrane segment at 589-609 (IFGITILVVLTLGSFVFYIYI) threads the bilayer. The Cytoplasmic portion of the chain corresponds to 610–684 (RKHTNKTRAI…LDESFELENL (75 aa)). Residues 641-684 (LEHGYDFETDQSQPRSGQSAPKKNGSYTRVPNTELDESFELENL) are disordered. The segment covering 650–671 (DQSQPRSGQSAPKKNGSYTRVP) has biased composition (polar residues). The span at 674-684 (ELDESFELENL) shows a compositional bias: acidic residues.

This sequence belongs to the peptidase S10 family.

It is found in the golgi apparatus. It localises to the trans-Golgi network membrane. It catalyses the reaction Preferential release of a C-terminal arginine or lysine residue.. In terms of biological role, protease with a carboxypeptidase B-like function involved in the C-terminal processing of the lysine and arginine residues from protein precursors. Promotes cell fusion and is involved in the programmed cell death. The protein is Pheromone-processing carboxypeptidase KEX1 (KEX1) of Zygosaccharomyces rouxii (strain ATCC 2623 / CBS 732 / NBRC 1130 / NCYC 568 / NRRL Y-229).